Here is a 370-residue protein sequence, read N- to C-terminus: DNA replication and repair protein RecF (370 aa).

30–37 contributes to the ATP binding site; the sequence is GENAQGKT.

The protein belongs to the RecF family.

The protein localises to the cytoplasm. The RecF protein is involved in DNA metabolism; it is required for DNA replication and normal SOS inducibility. RecF binds preferentially to single-stranded, linear DNA. It also seems to bind ATP. The polypeptide is DNA replication and repair protein RecF (Listeria welshimeri serovar 6b (strain ATCC 35897 / DSM 20650 / CCUG 15529 / CIP 8149 / NCTC 11857 / SLCC 5334 / V8)).